We begin with the raw amino-acid sequence, 374 residues long: Chaperone protein DnaJ (374 aa).

Residues 5–70 form the J domain; that stretch reads DYYEVLGVNR…RKRASYDQFG (66 aa). Residues 133-210 form a CR-type zinc finger; it reads GLSRTIKVPT…CHGQGRQQQT (78 aa). Zn(2+)-binding residues include cysteine 146, cysteine 149, cysteine 162, cysteine 165, cysteine 184, cysteine 187, cysteine 198, and cysteine 201. CXXCXGXG motif repeat units lie at residues 146–153, 162–169, 184–191, and 198–205; these read CKTCNGSG, CPRCNGSG, CSVCRGRG, and CTDCHGQG.

This sequence belongs to the DnaJ family. As to quaternary structure, homodimer. Zn(2+) serves as cofactor.

It is found in the cytoplasm. Participates actively in the response to hyperosmotic and heat shock by preventing the aggregation of stress-denatured proteins and by disaggregating proteins, also in an autonomous, DnaK-independent fashion. Unfolded proteins bind initially to DnaJ; upon interaction with the DnaJ-bound protein, DnaK hydrolyzes its bound ATP, resulting in the formation of a stable complex. GrpE releases ADP from DnaK; ATP binding to DnaK triggers the release of the substrate protein, thus completing the reaction cycle. Several rounds of ATP-dependent interactions between DnaJ, DnaK and GrpE are required for fully efficient folding. Also involved, together with DnaK and GrpE, in the DNA replication of plasmids through activation of initiation proteins. The chain is Chaperone protein DnaJ from Coxiella burnetii (strain CbuG_Q212) (Coxiella burnetii (strain Q212)).